Here is a 384-residue protein sequence, read N- to C-terminus: Protein V (384 aa).

2 disordered regions span residues 1–23 (MDQD…GGRE) and 38–317 (SEPT…TKKG). Basic and acidic residues predominate over residues 7–20 (ILKEDSEVEREAPG). A compositionally biased stretch (polar residues) spans 50–59 (LHNTINTPQG). A Phosphoserine; by host modification is found at Ser68. Residues 83–101 (RSGEESRVSGRTSKPEAEA) are compositionally biased toward basic and acidic residues. A Phosphoserine; by host modification is found at Ser125. A compositionally biased stretch (basic and acidic residues) spans 150 to 168 (GIEDENREMAAHPDKRGED). Residues 191-206 (ASNNGRSMEPGSSHSA) are compositionally biased toward polar residues. Phosphoserine; by host is present on residues Ser192, Ser249, Ser257, and Ser260. Residues His318, Cys337, Cys341, Cys353, Cys355, Cys358, Cys362, and Cys365 each coordinate Zn(2+).

The protein belongs to the paramyxoviruses V protein family. In terms of assembly, interacts with host IFIH1/MDA5 and DHX58/LGP2. Interacts with host IRF3. Interacts with host RIGI regulatory protein (via CARDs domain) and host TRIM25 (via SPRY domain); these interactions prevent TRIM25-mediated ubiquitination of RIG-I and disrupts downstream RIG-I signaling.

Its subcellular location is the host cytoplasm. Its function is as follows. Plays an essential role in the inhibition of host immune response. Prevents the establishment of cellular antiviral state by blocking interferon-alpha/beta (IFN-alpha/beta) production and signaling pathway. Interacts with host IFIH1/MDA5 and DHX58/LGP2 to inhibit the transduction pathway involved in the activation of IFN-beta promoter, thus protecting the virus against cell antiviral state. Also interacts with and inhibits host IRF3. Blocks the type I interferon signaling pathway by disrupting the RIG-I signaling pathway. The chain is Protein V (P/V/C) from Sendai virus (strain Z) (SeV).